The chain runs to 116 residues: Endoribonuclease toxin ChpB (116 aa).

This sequence belongs to the PemK/MazF family. In terms of assembly, homodimer, interacts with ChpS, which inhibits the endoribonuclease activity.

Its activity is regulated as follows. Stimulated in vitro in a concentration-dependent fashion by extracellular death factor (EDF, a quorum sensing pentapeptide sequence NNWNN, probably produced from the zwf gene product glucose-6-phosphate 1-dehydrogenase), which is able to overcome inhibition by cognate antitoxin ChpS. Functionally, toxic component of a type II toxin-antitoxin (TA) system. ChpB is a sequence-specific mRNA and (weak) tmRNA endoribonuclease that inhibits protein synthesis and induces bacterial stasis. Cleavage is independent of the ribosome. Cleavage occurs at ACY sequences where Y is not C. The endoribonuclease activity is not as strong as that of MazF. The endoribonuclease activity (a toxin) is inhibited by its labile cognate antitoxin ChpS. Toxicity results when the levels of ChpS decrease in the cell, leading to mRNA degradation. Both ChpS and ChpB probably bind to the promoter region of the chpS-chpB operon to autoregulate their synthesis. This Escherichia coli (strain K12) protein is Endoribonuclease toxin ChpB (chpB).